The sequence spans 249 residues: Chromosome-partitioning ATPase Soj (249 aa).

10 residues coordinate ATP: K15, G16, G17, V18, G19, K20, T21, T22, P207, and N209. G17 provides a ligand contact to ADP. The ADP site is built by G19, K20, T21, T22, P207, and N209. Position 21 (T21) interacts with Mg(2+).

It belongs to the ParA family. In terms of assembly, monomer in the absence of nucleotides or presence of ADP, in the presence of ATP is found in a monomer-dimer equilibrium. ATP-binding is required for DNA-binding. Probably interacts with Spo0J.

The catalysed reaction is ATP + H2O = ADP + phosphate + H(+). ATPase activity is stimulated 10-fold in the presence of Spo0J and parS DNA (a plasmid centromere-like site or plasmid DNA itself). The first 20 residues of Spo0J stimulate its ATPase activity by 8%. Its function is as follows. ATPase probably involved in chromosome partitioning. Cooperatively binds dsDNA, forming nucleoprotein filaments in a strictly ATP-dependent fashion. Can also bind ssDNA with lower affinity. This is Chromosome-partitioning ATPase Soj from Thermus thermophilus (strain ATCC BAA-163 / DSM 7039 / HB27).